A 308-amino-acid polypeptide reads, in one-letter code: Carbonic anhydrase 4 (308 aa).

Residues 1–18 (MQLLFALLALGALRPLAG) form the signal peptide. Residues 21-281 (LHWCYEIQAS…LGDRSVFKSQ (261 aa)) enclose the Alpha-carbonic anhydrase domain. 2 disulfide bridges follow: Cys24–Cys34 and Cys44–Cys225. N-linked (GlcNAc...) asparagine glycosylation is present at Asn31. His86 (proton donor/acceptor) is an active-site residue. The Zn(2+) site is built by His113, His115, and His138. Asn192 carries N-linked (GlcNAc...) asparagine glycosylation. 221–222 (TT) contacts substrate. Ser280 carries the GPI-anchor amidated serine lipid modification. The propeptide at 281-308 (QAAGQLLPLPLPTLLVPTLACVMAGLLR) is removed in mature form.

This sequence belongs to the alpha-carbonic anhydrase family. As to quaternary structure, interacts with SLC4A4. Zn(2+) is required as a cofactor.

Its subcellular location is the cell membrane. It catalyses the reaction hydrogencarbonate + H(+) = CO2 + H2O. Inhibited by acetazolamide. Functionally, catalyzes the reversible hydration of carbon dioxide into bicarbonate and protons and thus is essential to maintaining intracellular and extracellular pH. May stimulate the sodium/bicarbonate transporter activity of SLC4A4 that acts in pH homeostasis. It is essential for acid overload removal from the retina and retina epithelium, and acid release in the choriocapillaris in the choroid. The sequence is that of Carbonic anhydrase 4 (CA4) from Oryctolagus cuniculus (Rabbit).